The following is a 350-amino-acid chain: Putative isomerase YbhH (350 aa).

Belongs to the PrpF family.

The sequence is that of Putative isomerase YbhH (ybhH) from Escherichia coli O6:H1 (strain CFT073 / ATCC 700928 / UPEC).